Reading from the N-terminus, the 568-residue chain is Sphingosine-1-phosphate lyase 1 (568 aa).

At 1-40 (MPGTDLLKLKDFEPYLEILESYSTKAKNYVNGYCTKYEPW) the chain is on the lumenal side. Residues 41–61 (QLIAWSVLCTLLIVWVYELIF) traverse the membrane as a helical; Signal-anchor for type III membrane protein segment. Topologically, residues 62-568 (QPESLWSRFK…NQMNGSPKPR (507 aa)) are cytoplasmic. N6-(pyridoxal phosphate)lysine; alternate is present on Lys353. Lys353 carries the N6-acetyllysine; alternate modification. Residues Tyr356 and Tyr366 each carry the 3'-nitrotyrosine modification. Ser564 carries the phosphoserine modification.

It belongs to the group II decarboxylase family. Sphingosine-1-phosphate lyase subfamily. It depends on pyridoxal 5'-phosphate as a cofactor. As to expression, highest levels are found in liver, small intestine and thymus, followed by kidney, lung, heart, spleen and brain (at protein level). Also detected in stomach, testis and skeletal muscle (at protein level).

The protein resides in the endoplasmic reticulum membrane. It carries out the reaction sphinganine 1-phosphate = hexadecanal + phosphoethanolamine. The catalysed reaction is sphing-4-enine 1-phosphate = (2E)-hexadecenal + phosphoethanolamine. Its pathway is lipid metabolism; sphingolipid metabolism. Its function is as follows. Cleaves phosphorylated sphingoid bases (PSBs), such as sphingosine-1-phosphate, into fatty aldehydes and phosphoethanolamine. Elevates stress-induced ceramide production and apoptosis. Required for global lipid homeostasis in liver and cholesterol homeostasis in fibroblasts. Involved in the regulation of pro-inflammatory response and neutrophil trafficking. Modulates neuronal autophagy via phosphoethanolamine production which regulates accumulation of aggregate-prone proteins such as APP. Seems to play a role in establishing neuronal contact sites and axonal maintenance. This Mus musculus (Mouse) protein is Sphingosine-1-phosphate lyase 1.